A 104-amino-acid polypeptide reads, in one-letter code: Large ribosomal subunit protein uL24 (104 aa).

Belongs to the universal ribosomal protein uL24 family. As to quaternary structure, part of the 50S ribosomal subunit.

Functionally, one of two assembly initiator proteins, it binds directly to the 5'-end of the 23S rRNA, where it nucleates assembly of the 50S subunit. One of the proteins that surrounds the polypeptide exit tunnel on the outside of the subunit. This Methylobacterium radiotolerans (strain ATCC 27329 / DSM 1819 / JCM 2831 / NBRC 15690 / NCIMB 10815 / 0-1) protein is Large ribosomal subunit protein uL24.